The chain runs to 149 residues: Large ribosomal subunit protein bL9 (149 aa).

This sequence belongs to the bacterial ribosomal protein bL9 family.

Functionally, binds to the 23S rRNA. This Stenotrophomonas maltophilia (strain K279a) protein is Large ribosomal subunit protein bL9.